The primary structure comprises 256 residues: Mannose-specific lectin 1 (256 aa).

A signal peptide spans Met-1–Ala-23. Bulb-type lectin domains follow at residues Thr-26 to Arg-131 and Asn-145 to Ser-252. Residues Gln-51–Asn-55, Tyr-59, Trp-63, Gln-64, Gln-170–Asn-174, Tyr-178, and Tyr-182–Gln-185 each bind beta-D-mannose. A Carbohydrate-binding motif 1 motif is present at residues Gln-51 to Tyr-59. 2 cysteine pairs are disulfide-bonded: Cys-54-Cys-74 and Cys-173-Cys-195. A Carbohydrate-binding motif 2 motif is present at residues Gln-170–Tyr-178.

Forms heterodimers.

The protein resides in the secreted. Mannose-specific lectin. Shows agglutinating activity towards erythrocytes from rabbit. The chain is Mannose-specific lectin 1 from Remusatia vivipara (Hitchhiker elephant ear).